Consider the following 307-residue polypeptide: Aspartate carbamoyltransferase catalytic subunit (307 aa).

Carbamoyl phosphate is bound by residues R59 and T60. K87 provides a ligand contact to L-aspartate. Carbamoyl phosphate-binding residues include R109, H137, and Q140. Residues R173 and R223 each contribute to the L-aspartate site. The carbamoyl phosphate site is built by G266 and P267.

Belongs to the aspartate/ornithine carbamoyltransferase superfamily. ATCase family. As to quaternary structure, heterododecamer (2C3:3R2) of six catalytic PyrB chains organized as two trimers (C3), and six regulatory PyrI chains organized as three dimers (R2).

It catalyses the reaction carbamoyl phosphate + L-aspartate = N-carbamoyl-L-aspartate + phosphate + H(+). The protein operates within pyrimidine metabolism; UMP biosynthesis via de novo pathway; (S)-dihydroorotate from bicarbonate: step 2/3. In terms of biological role, catalyzes the condensation of carbamoyl phosphate and aspartate to form carbamoyl aspartate and inorganic phosphate, the committed step in the de novo pyrimidine nucleotide biosynthesis pathway. The sequence is that of Aspartate carbamoyltransferase catalytic subunit from Helicobacter pylori (strain ATCC 700392 / 26695) (Campylobacter pylori).